The sequence spans 286 residues: MSTKFALVTGCGQGGIGEALITEYARRGIHAIATVLPAEPSDHLARAGITFFPLDVTNEESVLELKARVQKLTGGRLDVLVNCAGIAYTMTAIDTDVAAVQRMFNVNVFGPMRMVHHFHDMIIKATGAIVNIGSIGGVVPYLYGSSYNATKAALQHWSNTLRVEMAPFDVRVITVISGEVATNILKNDAHRRLPEGSYYSPLAENFRQHVTRTPPRTTDRFQYAANVVAESLRSSPSAWFWYGSQSTLIRFLDMFCWRTVWDSLFWRMFDLGKLKEAHSSKAKKQV.

Residues V8, T34, D55, Y147, K151, V180, and T182 each contribute to the NADP(+) site. The active-site Proton acceptor is the Y147. K151 (lowers pKa of active site Tyr) is an active-site residue.

It belongs to the short-chain dehydrogenases/reductases (SDR) family.

It functions in the pathway secondary metabolite biosynthesis. Short-chain dehydrogenase; part of the gene cluster that mediates the biosynthesis of flavoglaucin and congeners (including aspergin, dihydroauroglaucin and auroglaucin), prenylated salicylaldehyde derivatives carrying a saturated or an unsaturated C-7 side chain. The PKS fogA releases the carboxylic acid (8E,10E,12E)-3,5,7-trihydroxytetradeca-8,10,12-trienoic acid as its product, as well as derivatives with one and two double bonds. FogA is indeed able to reduce the initial triketide, thus being at least partially responsible for the differently saturated heptyl side chains of flavoglaucin congeners. The oxidoreductases fogB, fogC and fogD modify the nascent polyketide in fogA-bound form and, together, fogA, fogB, fogC and fogD are necessary for the formation of the aromatic core and the cyclized PKS products are released as salicyl alcohols. In particular, fogB is responsible for oxidation of a hydroxyl group or reduction of remaining double bond(s) at the C-7 residue whereas fogD is probably involved in the reductive release of the modified PKS products. The cytochrome P450 monooxygenase fogE is then responsible for the hydroxylation at C-3 of the benzene ring. The fogE products are substrates of the prenyltransferase fogH and the prenylated benzyl alcohols are subsequently oxidized by the fogF to produce the final aryl aldehydes flavoglaucin and congeners. The short-chain dehydrogenase fogG does not seem to be involved in the biosynthesis of the prenylated salicylaldehyde derivatives. The sequence is that of Short-chain dehydrogenase fogD from Aspergillus ruber (strain CBS 135680).